Reading from the N-terminus, the 875-residue chain is DNA mismatch repair protein MutS (875 aa).

625-632 lines the ATP pocket; the sequence is GPNMGGKS.

It belongs to the DNA mismatch repair MutS family.

Its function is as follows. This protein is involved in the repair of mismatches in DNA. It is possible that it carries out the mismatch recognition step. This protein has a weak ATPase activity. This is DNA mismatch repair protein MutS from Symbiobacterium thermophilum (strain DSM 24528 / JCM 14929 / IAM 14863 / T).